A 292-amino-acid polypeptide reads, in one-letter code: Bifunctional protein FolD (292 aa).

NADP(+)-binding positions include 161–163 and I231; that span reads GRS.

It belongs to the tetrahydrofolate dehydrogenase/cyclohydrolase family. In terms of assembly, homodimer.

The enzyme catalyses (6R)-5,10-methylene-5,6,7,8-tetrahydrofolate + NADP(+) = (6R)-5,10-methenyltetrahydrofolate + NADPH. It catalyses the reaction (6R)-5,10-methenyltetrahydrofolate + H2O = (6R)-10-formyltetrahydrofolate + H(+). Its pathway is one-carbon metabolism; tetrahydrofolate interconversion. Its function is as follows. Catalyzes the oxidation of 5,10-methylenetetrahydrofolate to 5,10-methenyltetrahydrofolate and then the hydrolysis of 5,10-methenyltetrahydrofolate to 10-formyltetrahydrofolate. The polypeptide is Bifunctional protein FolD (Protochlamydia amoebophila (strain UWE25)).